The primary structure comprises 547 residues: Sensor histidine kinase CitA (547 aa).

Residues 1 to 23 (MSIYPMYTRKITHWFARRSFQNR) are Cytoplasmic-facing. Residues 24 to 44 (IFLLILFTSTIVMLAMSWYLT) form a helical membrane-spanning segment. The Periplasmic portion of the chain corresponds to 45–180 (DITEERLHYQ…TIEQLENWLS (136 aa)). The citrate site is built by arginine 109, histidine 112, arginine 150, and lysine 152. The chain crosses the membrane as a helical span at residues 181–201 (LQISSLLIPMAIMLLLLLFCA). Residues 202-547 (RRFSLHIKKQ…IPLTRDEHHG (346 aa)) are Cytoplasmic-facing. One can recognise a PAS domain in the interval 225-264 (IQQSVLFESVFEGLIAIDSDYKITAINQTARRLLNLSQPE). A Histidine kinase domain is found at 347–542 (AVQHEHRNLI…IFTLYIPLTR (196 aa)). A Phosphohistidine; by autocatalysis modification is found at histidine 350.

As to quaternary structure, homodimer. In vitro CitB and the CitA kinase domain form a complex, formation of which is enhanced by ATP. In terms of processing, autophosphorylated.

It localises to the cell inner membrane. It catalyses the reaction ATP + protein L-histidine = ADP + protein N-phospho-L-histidine.. Member of the two-component regulatory system CitA/CitB. Probably activates CitB by phosphorylation. The periplasmic domain binds H-citrate(2-), which is essential for induction of the citrate-fermentation genes. The chain is Sensor histidine kinase CitA (citA) from Klebsiella pneumoniae.